The following is a 428-amino-acid chain: Aminotransferase verI (428 aa).

K254 is modified (N6-(pyridoxal phosphate)lysine).

The protein belongs to the class-I pyridoxal-phosphate-dependent aminotransferase family. The cofactor is pyridoxal 5'-phosphate.

It functions in the pathway mycotoxin biosynthesis. Aminotransferase; part of the gene cluster that mediates the biosynthesis of 11'-deoxyverticillin A, one of the dimeric epipolythiodioxopiperazines (ETPs) from the verticillin family that act as mycotoxins. 11'-deoxyverticillin A is required for normal conidiation. The nonribosomal peptide synthetase verP is speculated to be responsible for condensation of amino acids to form the carbon skeleton of verticillin, whereas the cluster-specific tailoring enzymes are involved in further modifications leading to the production of 11'-deoxyverticillin A. The chain is Aminotransferase verI from Clonostachys rogersoniana.